Consider the following 842-residue polypeptide: MPLSYQHFRRILLLDEEAGPLEEELPRLADEDLNRRVAEDLNLQLPNVSIPWTHKVGNFTGLYSSTIPVFNPNWKTPSFPDIHLHQDIINKCEQFVGPLTVNEKRRLNLVMPARFFPISTKYLPLEKGIKPYYPDNVVNHYFQTRHYLHTLWKAGHLYKRETTRSASFCGSPYSWEQELHHGAFLDGPSRMGEEYFHHQSSGIFSRPPVGSSIQSKHQKSRLGPQSQQRPLDGSQQGRSGSLRAGVHSPTRRPFGVEPSGSRHAKNIASRPASCLHQSAVRKAAYPNHSTFERHSSSGHAVELHNISSSSAGSQSKRPVFSCWWLQFRNSEPCSDYCLTHLVNLLEDWGPCTEHGKHHIRIPRTPARVTGGVFLVDKNPHNTAESRLVVDFSQFSRGSSRVSWPKFAVPNLQSLTNLLSSNLSWLSLDVSAAFYHLPLHPAAMPHLLVGSSGLSRYVARLSSNSRIINHQHGTLPNLHDSCSRNLYVSLMLLFKTFGRKLHLYSHPIIMGFRKIPMGVGLSPFLLAQFTSAICSVVRRAFPHCLAFSYMDDVVLGAKSVRHLESLYTSVTNFLLSLGIHLNPNKTKRWGYSLNFMGYVIGSWGSLPQEHIIQKIKHCFGKLPVNRPIDWKVCQGIVGLLGFAAPFTQCGYPALMPLYTCIQSKQAFTFSPTYKAFLCKQYLNLYPVARQRPGLCQVFADATPTGWGLAIGIQRMRGTFVAPLPIHTAELLAACFARSRSGAKLIGTDNSVVLSRKYTSFPWLLGCAANWILRGTSFVYVPSALNPADDPSRGRLGIFRPLLRLRFRPTTGRTSLYAVSPSVPSHLPDRVHFASPLHVAWRPP.

The segment at 1–177 (MPLSYQHFRR…FCGSPYSWEQ (177 aa)) is terminal protein domain (TP). The spacer stretch occupies residues 178–345 (ELHHGAFLDG…YCLTHLVNLL (168 aa)). The segment at 205–271 (SRPPVGSSIQ…RHAKNIASRP (67 aa)) is disordered. Residues 223–239 (GPQSQQRPLDGSQQGRS) show a composition bias toward polar residues. The polymerase/reverse transcriptase domain (RT) stretch occupies residues 346–689 (EDWGPCTEHG…YLNLYPVARQ (344 aa)). A Reverse transcriptase domain is found at 356–599 (KHHIRIPRTP…YSLNFMGYVI (244 aa)). Asp-428, Asp-550, and Asp-551 together coordinate Mg(2+).

Belongs to the hepadnaviridae P protein family.

The enzyme catalyses DNA(n) + a 2'-deoxyribonucleoside 5'-triphosphate = DNA(n+1) + diphosphate. The catalysed reaction is Endonucleolytic cleavage to 5'-phosphomonoester.. Activated by host HSP70 and HSP40 in vitro to be able to bind the epsilon loop of the pgRNA. Because deletion of the RNase H region renders the protein partly chaperone-independent, the chaperones may be needed indirectly to relieve occlusion of the RNA-binding site by this domain. Inhibited by several reverse-transcriptase inhibitors: Lamivudine, Adefovir and Entecavir. Multifunctional enzyme that converts the viral RNA genome into dsDNA in viral cytoplasmic capsids. This enzyme displays a DNA polymerase activity that can copy either DNA or RNA templates, and a ribonuclease H (RNase H) activity that cleaves the RNA strand of RNA-DNA heteroduplexes in a partially processive 3'- to 5'-endonucleasic mode. Neo-synthesized pregenomic RNA (pgRNA) are encapsidated together with the P protein, and reverse-transcribed inside the nucleocapsid. Initiation of reverse-transcription occurs first by binding the epsilon loop on the pgRNA genome, and is initiated by protein priming, thereby the 5'-end of (-)DNA is covalently linked to P protein. Partial (+)DNA is synthesized from the (-)DNA template and generates the relaxed circular DNA (RC-DNA) genome. After budding and infection, the RC-DNA migrates in the nucleus, and is converted into a plasmid-like covalently closed circular DNA (cccDNA). The activity of P protein does not seem to be necessary for cccDNA generation, and is presumably released from (+)DNA by host nuclear DNA repair machinery. This is Protein P from Hepatitis B virus genotype E subtype ayw4 (isolate Kou) (HBV-E).